A 264-amino-acid chain; its full sequence is Carbonic anhydrase 7 (264 aa).

One can recognise an Alpha-carbonic anhydrase domain in the interval H5 to F262. The active-site Proton donor/acceptor is H66. Zn(2+) is bound by residues H96, H98, and H121. A substrate-binding site is contributed by T201–T202.

The protein belongs to the alpha-carbonic anhydrase family. The cofactor is Zn(2+).

It is found in the cytoplasm. It carries out the reaction hydrogencarbonate + H(+) = CO2 + H2O. With respect to regulation, activated by histamine, L-adrenaline, L- and D-histidine, and L- and D-phenylalanine. Inhibited by coumarins, sulfonamide derivatives such as acetazolamide (AZA), by saccharin and Foscarnet (phosphonoformate trisodium salt). Functionally, reversible hydration of carbon dioxide. This is Carbonic anhydrase 7 (CA7) from Homo sapiens (Human).